Here is a 238-residue protein sequence, read N- to C-terminus: Large ribosomal subunit protein uL2 (238 aa).

2 disordered regions span residues 1–34 (MGKRLRQQRAGRGTPTYRSRAHIHPGPAKYPPLS) and 197–238 (VDHP…RRKR). A compositionally biased stretch (basic residues) spans 224–238 (KVGHIAARRTGRRKR).

The protein belongs to the universal ribosomal protein uL2 family. In terms of assembly, part of the 50S ribosomal subunit. Forms a bridge to the 30S subunit in the 70S ribosome.

One of the primary rRNA binding proteins. Required for association of the 30S and 50S subunits to form the 70S ribosome, for tRNA binding and peptide bond formation. It has been suggested to have peptidyltransferase activity; this is somewhat controversial. Makes several contacts with the 16S rRNA in the 70S ribosome. This Aeropyrum pernix (strain ATCC 700893 / DSM 11879 / JCM 9820 / NBRC 100138 / K1) protein is Large ribosomal subunit protein uL2.